We begin with the raw amino-acid sequence, 700 residues long: Elongation factor G (700 aa).

Residues 8-290 (SLYRNIGISA…AVIDYLPAPT (283 aa)) form the tr-type G domain. GTP contacts are provided by residues 17 to 24 (AHIDAGKT), 88 to 92 (DTPGH), and 142 to 145 (NKMD).

This sequence belongs to the TRAFAC class translation factor GTPase superfamily. Classic translation factor GTPase family. EF-G/EF-2 subfamily.

It localises to the cytoplasm. In terms of biological role, catalyzes the GTP-dependent ribosomal translocation step during translation elongation. During this step, the ribosome changes from the pre-translocational (PRE) to the post-translocational (POST) state as the newly formed A-site-bound peptidyl-tRNA and P-site-bound deacylated tRNA move to the P and E sites, respectively. Catalyzes the coordinated movement of the two tRNA molecules, the mRNA and conformational changes in the ribosome. The protein is Elongation factor G of Histophilus somni (strain 129Pt) (Haemophilus somnus).